A 376-amino-acid polypeptide reads, in one-letter code: UDP-4-amino-4,6-dideoxy-N-acetyl-beta-L-altrosamine transaminase (376 aa).

Residues Tyr4, 24 to 27 (EILT), Ala54, and Ser176 contribute to the substrate site. The residue at position 181 (Lys181) is an N6-(pyridoxal phosphate)lysine. Residues Asn226 and 311-314 (QVHY) each bind substrate.

The protein belongs to the DegT/DnrJ/EryC1 family.

It catalyses the reaction UDP-4-amino-4,6-dideoxy-N-acetyl-beta-L-altrosamine + 2-oxoglutarate = UDP-2-acetamido-2,6-dideoxy-beta-L-arabino-hex-4-ulose + L-glutamate. Its function is as follows. Catalyzes the second step in the biosynthesis of pseudaminic acid, a sialic-acid-like sugar that is used to modify flagellin. Uses UDP-2-acetamido-2,6-dideoxy-beta-L-arabino-4-hexulose as substrate producing UDP-4-amino-4,6-dideoxy-beta-L-AltNAc. The protein is UDP-4-amino-4,6-dideoxy-N-acetyl-beta-L-altrosamine transaminase (pseC) of Campylobacter jejuni subsp. jejuni serotype O:2 (strain ATCC 700819 / NCTC 11168).